We begin with the raw amino-acid sequence, 346 residues long: Putative serine/threonine-protein kinase K06H7.1 (346 aa).

The 268-residue stretch at 20 to 287 folds into the Protein kinase domain; it reads YKVVQKLGEG…KLFKLLEDVM (268 aa). ATP-binding positions include 26–34 and lysine 50; that span reads LGEGGCGSV. The active-site Proton acceptor is the aspartate 141. The interval 302-326 is disordered; that stretch reads PEKKKNPASQGNKFGLGKKGTKESG.

It belongs to the protein kinase superfamily. Ser/Thr protein kinase family.

It carries out the reaction L-seryl-[protein] + ATP = O-phospho-L-seryl-[protein] + ADP + H(+). The enzyme catalyses L-threonyl-[protein] + ATP = O-phospho-L-threonyl-[protein] + ADP + H(+). This is Putative serine/threonine-protein kinase K06H7.1 from Caenorhabditis elegans.